Here is a 479-residue protein sequence, read N- to C-terminus: Zinc metalloproteinase/disintegrin (479 aa).

The signal sequence occupies residues 1 to 20 (MIQVLLVTICLAAFPYQGSS). The propeptide occupies 21–187 (IILESGKVND…PIKKASQLIV (167 aa)). In terms of domain architecture, Peptidase M12B spans 193-390 (RYMEIVIVVD…ENPPCILNKP (198 aa)). Glu196 and Asp280 together coordinate Ca(2+). Disulfide bonds link Cys304–Cys385, Cys344–Cys369, and Cys346–Cys352. His329 contacts Zn(2+). Glu330 is a catalytic residue. Zn(2+) contacts are provided by His333 and His339. Ca(2+) is bound by residues Cys385 and Asn388. The propeptide occupies 390–414 (PLRTDTVSTPVSGNELLEAGKDYDR). One can recognise a Disintegrin domain in the interval 398-479 (TPVSGNELLE…ADCPRNPYHA (82 aa)). 3 disulfides stabilise this stretch: Cys435–Cys441, Cys440–Cys465, and Cys453–Cys472. The Cell attachment site signature appears at 457 to 459 (RGD).

This sequence belongs to the venom metalloproteinase (M12B) family. P-II subfamily. P-IIa sub-subfamily. Monomer. It depends on Zn(2+) as a cofactor. In terms of tissue distribution, expressed by the venom gland.

It is found in the secreted. Snake venom metalloproteinase that impairs hemostasis in the envenomed animal. Functionally, inhibits platelet aggregation induced by ADP, thrombin, platelet-activating factor and collagen. Acts by inhibiting fibrinogen interaction with platelet receptors GPIIb/GPIIIa (ITGA2B/ITGB3). The sequence is that of Zinc metalloproteinase/disintegrin from Deinagkistrodon acutus (Hundred-pace snake).